The sequence spans 293 residues: Ribosomal protein L11 methyltransferase (293 aa).

S-adenosyl-L-methionine-binding residues include threonine 145, glycine 166, aspartate 188, and asparagine 230.

This sequence belongs to the methyltransferase superfamily. PrmA family.

It is found in the cytoplasm. The catalysed reaction is L-lysyl-[protein] + 3 S-adenosyl-L-methionine = N(6),N(6),N(6)-trimethyl-L-lysyl-[protein] + 3 S-adenosyl-L-homocysteine + 3 H(+). In terms of biological role, methylates ribosomal protein L11. The protein is Ribosomal protein L11 methyltransferase of Yersinia pseudotuberculosis serotype O:3 (strain YPIII).